Here is a 347-residue protein sequence, read N- to C-terminus: Protein RecA (347 aa).

65–72 (GPESSGKT) provides a ligand contact to ATP.

Belongs to the RecA family.

It is found in the cytoplasm. Its function is as follows. Can catalyze the hydrolysis of ATP in the presence of single-stranded DNA, the ATP-dependent uptake of single-stranded DNA by duplex DNA, and the ATP-dependent hybridization of homologous single-stranded DNAs. It interacts with LexA causing its activation and leading to its autocatalytic cleavage. This is Protein RecA from Marinobacter nauticus (strain ATCC 700491 / DSM 11845 / VT8) (Marinobacter aquaeolei).